The sequence spans 842 residues: Protein P (842 aa).

The segment at 1-177 (MPLSYQHFRR…FCGSPYSWEQ (177 aa)) is terminal protein domain (TP). The tract at residues 178-345 (ELHHGAFLDG…YCLTHLVNLL (168 aa)) is spacer. Positions 186–273 (DGPSRMGEES…AKNIASRSAS (88 aa)) are disordered. The span at 223–239 (GPQSQQRPLDGSQQGRS) shows a compositional bias: polar residues. Residues 346 to 689 (EDWGPCTEHG…YLNLYPVARQ (344 aa)) form a polymerase/reverse transcriptase domain (RT) region. The 244-residue stretch at 356-599 (RHHIRIPRTP…YSLNFMGYVI (244 aa)) folds into the Reverse transcriptase domain. Positions 428, 550, and 551 each coordinate Mg(2+).

This sequence belongs to the hepadnaviridae P protein family.

The enzyme catalyses DNA(n) + a 2'-deoxyribonucleoside 5'-triphosphate = DNA(n+1) + diphosphate. The catalysed reaction is Endonucleolytic cleavage to 5'-phosphomonoester.. Its activity is regulated as follows. Activated by host HSP70 and HSP40 in vitro to be able to bind the epsilon loop of the pgRNA. Because deletion of the RNase H region renders the protein partly chaperone-independent, the chaperones may be needed indirectly to relieve occlusion of the RNA-binding site by this domain. Inhibited by several reverse-transcriptase inhibitors: Lamivudine, Adefovir and Entecavir. In terms of biological role, multifunctional enzyme that converts the viral RNA genome into dsDNA in viral cytoplasmic capsids. This enzyme displays a DNA polymerase activity that can copy either DNA or RNA templates, and a ribonuclease H (RNase H) activity that cleaves the RNA strand of RNA-DNA heteroduplexes in a partially processive 3'- to 5'-endonucleasic mode. Neo-synthesized pregenomic RNA (pgRNA) are encapsidated together with the P protein, and reverse-transcribed inside the nucleocapsid. Initiation of reverse-transcription occurs first by binding the epsilon loop on the pgRNA genome, and is initiated by protein priming, thereby the 5'-end of (-)DNA is covalently linked to P protein. Partial (+)DNA is synthesized from the (-)DNA template and generates the relaxed circular DNA (RC-DNA) genome. After budding and infection, the RC-DNA migrates in the nucleus, and is converted into a plasmid-like covalently closed circular DNA (cccDNA). The activity of P protein does not seem to be necessary for cccDNA generation, and is presumably released from (+)DNA by host nuclear DNA repair machinery. In Homo sapiens (Human), this protein is Protein P.